Consider the following 457-residue polypeptide: Acetylcholine receptor subunit alpha (457 aa).

The first 20 residues, 1–20, serve as a signal peptide directing secretion; sequence MEPRPLLLLLGLCSAGLVLG. Residues 21–230 are Extracellular-facing; that stretch reads SEHETRLVAK…ITYHFVMQRL (210 aa). 2 disulfide bridges follow: Cys-148/Cys-162 and Cys-212/Cys-213. Asn-161 carries an N-linked (GlcNAc...) asparagine glycan. A run of 3 helical transmembrane segments spans residues 231–255, 263–281, and 297–316; these read PLYF…VFYL, MTLS…LVIV, and YMLF…VIVI. Residues 317 to 428 lie on the Cytoplasmic side of the membrane; the sequence is NTHHRSPSTH…WKYVAMVMDH (112 aa). Residues 429-447 traverse the membrane as a helical segment; that stretch reads ILLAVFMLVCIIGTLAVFA.

The protein belongs to the ligand-gated ion channel (TC 1.A.9) family. Acetylcholine receptor (TC 1.A.9.1) subfamily. Alpha-1/CHRNA1 sub-subfamily. One of the alpha chains that assemble within the acetylcholine receptor, a pentamer of two alpha chains, a beta, a delta, and a gamma (in immature muscle) or epsilon (in mature muscle) chains. The muscle heteropentamer composed of alpha-1, beta-1, delta, epsilon subunits interacts with the alpha-conotoxin ImII.

It is found in the postsynaptic cell membrane. It localises to the cell membrane. It carries out the reaction K(+)(in) = K(+)(out). It catalyses the reaction Na(+)(in) = Na(+)(out). Its function is as follows. Upon acetylcholine binding, the AChR responds by an extensive change in conformation that affects all subunits and leads to opening of an ion-conducting channel across the plasma membrane. This chain is Acetylcholine receptor subunit alpha (CHRNA1), found in Bos taurus (Bovine).